A 143-amino-acid chain; its full sequence is Actin-depolymerizing factor 5 (143 aa).

The 133-residue stretch at 11-143 (GMRVTDECTS…GFDIIQDRAK (133 aa)) folds into the ADF-H domain.

It belongs to the actin-binding proteins ADF family. In terms of tissue distribution, expressed exclusively in root tip meristem.

It localises to the cytoplasm. The protein localises to the cytoskeleton. Functionally, actin-depolymerizing protein. Severs actin filaments (F-actin) and binds to actin monomers. The polypeptide is Actin-depolymerizing factor 5 (ADF5) (Arabidopsis thaliana (Mouse-ear cress)).